A 21-amino-acid polypeptide reads, in one-letter code: MVKTPITEAIAAADTQGRFLS.

Belongs to the phycobiliprotein family. As to quaternary structure, heterodimer of an alpha and a beta subunit, which further assembles into trimers and the trimers into hexamers. Post-translationally, contains one covalently linked bilin chromophore.

The protein localises to the cellular thylakoid membrane. In terms of biological role, light-harvesting photosynthetic bile pigment-protein from the phycobiliprotein complex (phycobilisome, PBS). Phycocyanin is the major phycobiliprotein in the PBS rod. The sequence is that of C-phycocyanin alpha subunit from Anabaena sp. (strain L31).